A 127-amino-acid chain; its full sequence is Fluoride-specific ion channel FluC (127 aa).

4 helical membrane passes run 4–24 (SILAIALGAALGALLRWFLGL), 36–56 (GTLLANLVGGYVIGAAIAYFA), 68–88 (LIITGFCGGLTTFSTFSAEVV), and 99–119 (AAGAIATHVSGSLLMTLLGLF). Na(+) contacts are provided by Gly75 and Thr78.

Belongs to the fluoride channel Fluc/FEX (TC 1.A.43) family.

Its subcellular location is the cell inner membrane. It carries out the reaction fluoride(in) = fluoride(out). Its activity is regulated as follows. Na(+) is not transported, but it plays an essential structural role and its presence is essential for fluoride channel function. In terms of biological role, fluoride-specific ion channel. Important for reducing fluoride concentration in the cell, thus reducing its toxicity. The sequence is that of Fluoride-specific ion channel FluC from Pseudomonas aeruginosa (strain UCBPP-PA14).